The following is a 457-amino-acid chain: Multidrug resistance protein MdtK (457 aa).

Helical transmembrane passes span 11–31 (LLAL…MGFV), 53–73 (IWLP…PVIA), 93–113 (WLAG…GYII), 127–147 (AVGY…FQVA), 160–180 (GMVM…IFIY), 188–208 (LGGI…FIAM), 243–263 (LPIA…ALLV), 276–296 (IALN…AAVT), 314–334 (AART…IFTV), 350–370 (VVAL…SDSI), 387–407 (IFFI…YILA), and 418–438 (PAGF…LMML).

The protein belongs to the multi antimicrobial extrusion (MATE) (TC 2.A.66.1) family. MdtK subfamily.

The protein localises to the cell inner membrane. Functionally, multidrug efflux pump that functions probably as a Na(+)/drug antiporter. The sequence is that of Multidrug resistance protein MdtK from Salmonella newport (strain SL254).